We begin with the raw amino-acid sequence, 80 residues long: UPF0154 protein MGAS10270_Spy0296 (80 aa).

The chain crosses the membrane as a helical span at residues 4–24; that stretch reads AIWILLLIVALGVGVFGGIFI.

It belongs to the UPF0154 family.

It localises to the cell membrane. In Streptococcus pyogenes serotype M2 (strain MGAS10270), this protein is UPF0154 protein MGAS10270_Spy0296.